We begin with the raw amino-acid sequence, 220 residues long: Deoxyribose-phosphate aldolase (220 aa).

Residue Asp-89 is the Proton donor/acceptor of the active site. Lys-151 acts as the Schiff-base intermediate with acetaldehyde in catalysis. Lys-180 acts as the Proton donor/acceptor in catalysis.

It belongs to the DeoC/FbaB aldolase family. DeoC type 1 subfamily.

It localises to the cytoplasm. It carries out the reaction 2-deoxy-D-ribose 5-phosphate = D-glyceraldehyde 3-phosphate + acetaldehyde. It functions in the pathway carbohydrate degradation; 2-deoxy-D-ribose 1-phosphate degradation; D-glyceraldehyde 3-phosphate and acetaldehyde from 2-deoxy-alpha-D-ribose 1-phosphate: step 2/2. Catalyzes a reversible aldol reaction between acetaldehyde and D-glyceraldehyde 3-phosphate to generate 2-deoxy-D-ribose 5-phosphate. This is Deoxyribose-phosphate aldolase from Staphylococcus epidermidis (strain ATCC 35984 / DSM 28319 / BCRC 17069 / CCUG 31568 / BM 3577 / RP62A).